Here is a 336-residue protein sequence, read N- to C-terminus: MKTLMRHGLAVCLALTTMCTSLLLVYSSLGGQKERPPQQQQQQQQQQQQASATGSSQPAAESSTQQRPGVPAGPRPLDGYLGVADHKPLKMHCRDCALVTSSGHLLHSRQGSQIDQTECVIRMNDAPTRGYGRDVGNRTSLRVIAHSSIQRILRNRHDLLNVSQGTVFIFWGPSSYMRRDGKGQVYNNLHLLSQVLPRLKAFMITRHKMLQFDELFKQETGKDRKISNTWLSTGWFTMTIALELCDRINVYGMVPPDFCRDPNHPSVPYHYYEPFGPDECTMYLSHERGRKGSHHRFITEKRVFKNWARTFNIHFFQPDWKPESLAINHPENKPVF.

At 1–8 (MKTLMRHG) the chain is on the cytoplasmic side. The chain crosses the membrane as a helical; Signal-anchor for type II membrane protein span at residues 9 to 29 (LAVCLALTTMCTSLLLVYSSL). Over 30 to 336 (GGQKERPPQQ…INHPENKPVF (307 aa)) the chain is Lumenal. The segment at 32 to 81 (QKERPPQQQQQQQQQQQQASATGSSQPAAESSTQQRPGVPAGPRPLDGYL) is disordered. Positions 38 to 49 (QQQQQQQQQQQQ) are enriched in low complexity. The span at 50–67 (ASATGSSQPAAESSTQQR) shows a compositional bias: polar residues. Cys-96 and Cys-245 are oxidised to a cystine. N-linked (GlcNAc...) asparagine glycosylation is found at Asn-137 and Asn-161.

This sequence belongs to the glycosyltransferase 29 family.

It localises to the golgi apparatus membrane. The enzyme catalyses a ganglioside GM1b (d18:1(4E)) + CMP-N-acetyl-beta-neuraminate = a ganglioside GD1alpha (d18:1(4E)) + CMP + H(+). It carries out the reaction N-acetyl-alpha-neuraminosyl-(2-&gt;3)-beta-D-galactosyl-(1-&gt;3)-N-acetyl-beta-D-glucosaminyl-(1-&gt;3)-beta-D-galactosyl-(1-&gt;4)-beta-D-glucosyl-(1&lt;-&gt;1')-N-acyl-sphing-4-enine + CMP-N-acetyl-beta-neuraminate = N-acetyl-alpha-neuraminosyl-(2-&gt;3)-beta-D-galactosyl-(1-&gt;3)-[N-acetyl-alpha-neuraminosyl-(2-&gt;6)]-N-acetyl-beta-D-glucosaminyl-(1-&gt;3)-beta-D-galactosyl-(1-&gt;4)-beta-D-glucosyl-(1&lt;-&gt;1')-N-acyl-sphing-4-enine + CMP + H(+). It functions in the pathway glycolipid biosynthesis. Predominantly catalyzes the biosynthesis of ganglioside GD1alpha from GM1b in the brain, by transferring the sialyl group (N-acetyl-alpha-neuraminyl or NeuAc) from CMP-NeuAc to the GalNAc residue on the NeuAc-alpha-2,3-Gal-beta-1,3-GalNAc sequence of GM1b. GD1alpha is a critical molecule in the communication and interaction between neuronal cells and their supportive cells, particularly in brain tissues, and functions as an adhesion molecule in the process of metastasis. Also shows activity towards sialyl Lc4Cer (N-acetyl-alpha-neuraminosyl-(2-&gt;3)-beta-D-galactosyl-(1-&gt;3)-N-acetyl-beta-D-glucosaminyl-(1-&gt;3)-beta-D-galactosyl-(1-&gt;4)-beta-D-glucosyl-(1&lt;-&gt;1')-N-acyl-sphing-4-enine) generating disialyl Lc4Cer, which can lead to the synthesis of disialyl Lewis a (Le(a)), suggested to be a cancer-associated antigen. In Homo sapiens (Human), this protein is Alpha-N-acetylgalactosaminide alpha-2,6-sialyltransferase 5 (ST6GALNAC5).